We begin with the raw amino-acid sequence, 451 residues long: Protein-tyrosine kinase 6 (451 aa).

The SH3 domain maps to 8 to 72 (HLGPKYVGLW…PHNYLAEKET (65 aa)). 4 positions are modified to phosphotyrosine: Y13, Y61, Y66, and Y114. Residues 78 to 170 (WFFGCISRSE…SHGLQLSMPC (93 aa)) form the SH2 domain. Residues 171-190 (WKHKTEPLPHWDDWERPREE) are linker. The region spanning 191-445 (FTLCKKLGAG…DLCEKLTGIT (255 aa)) is the Protein kinase domain. Residues 197–205 (LGAGYFGEV) and K219 each bind ATP. The active-site Proton acceptor is D312. A Phosphotyrosine; by autocatalysis modification is found at Y342. Y351 and Y447 each carry phosphotyrosine.

This sequence belongs to the protein kinase superfamily. Tyr protein kinase family. BRK/PTK6/SIK subfamily. As to quaternary structure, interacts with KHDRBS1. Interacts with phosphorylated IRS4. Interacts with GAP-A.p65. Interacts with ADAM15. Interacts (via SH3 and SH2 domains) with phosphorylated IRS4. Interacts (via SH3 domain) with SFPQ. Interacts with EGFR and ERBB2. Interacts with STAP2. Interacts with PNX. Interacts with SFPQ. Interacts with PTK/ATK. Interacts with CTNNB1. Post-translationally, autophosphorylated. Autophosphorylation of Tyr-342 leads to an increase of kinase activity. Tyr-447 binds to the SH2 domain when phosphorylated and negatively regulates kinase activity. Expressed only in epithelial tissues, including the skin and lining of the alimentary canal. Restricted to the cell layers immediately above the proliferative cell zone in these epithelia.

Its subcellular location is the cytoplasm. The protein resides in the nucleus. It localises to the membrane. It is found in the cell projection. The protein localises to the ruffle. It carries out the reaction L-tyrosyl-[protein] + ATP = O-phospho-L-tyrosyl-[protein] + ADP + H(+). Its activity is regulated as follows. Activated by EGF, NRG1 and IGF1. Inhibited by SOCS3 to phosphorylate STAT3. Stabilized in the inactive form by an association between the SH3 domain and the SH2-TK linker region. Interaction between Trp-184 within SH2-TK linker region and the catalytic domain appears essential for positive regulation of kinase activity. Its function is as follows. Non-receptor tyrosine-protein kinase implicated in the regulation of a variety of signaling pathways that control the differentiation and maintenance of normal epithelia, as well as tumor growth. Function seems to be context dependent and differ depending on cell type, as well as its intracellular localization. A number of potential nuclear and cytoplasmic substrates have been identified. These include the RNA-binding proteins: KHDRBS1/SAM68, KHDRBS2/SLM1, KHDRBS3/SLM2 and SFPQ/PSF; transcription factors: STAT3 and STAT5A/B and a variety of signaling molecules: ARHGAP35/p190RhoGAP, PXN/paxillin, BTK/ATK, STAP2/BKS. Phosphorylates the GTPase-activating protein ARAP1 following EGF stimulation which enhances EGFR signaling by delaying EGFR down-regulation. Also associates with a variety of proteins that are likely upstream of PTK6 in various signaling pathways, or for which PTK6 may play an adapter-like role. These proteins include ADAM15, EGFR, ERBB2, ERBB3 and IRS4. In normal or non-tumorigenic tissues, PTK6 promotes cellular differentiation and apoptosis. In tumors PTK6 contributes to cancer progression by sensitizing cells to mitogenic signals and enhancing proliferation, anchorage-independent survival and migration/invasion. Association with EGFR, ERBB2, ERBB3 may contribute to mammary tumor development and growth through enhancement of EGF-induced signaling via BTK/AKT and PI3 kinase. Contributes to migration and proliferation by contributing to EGF-mediated phosphorylation of ARHGAP35/p190RhoGAP, which promotes association with RASA1/p120RasGAP, inactivating RhoA while activating RAS. EGF stimulation resulted in phosphorylation of PNX/Paxillin by PTK6 and activation of RAC1 via CRK/CrKII, thereby promoting migration and invasion. PTK6 activates STAT3 and STAT5B to promote proliferation. Nuclear PTK6 may be important for regulating growth in normal epithelia, while cytoplasmic PTK6 might activate oncogenic signaling pathways. This chain is Protein-tyrosine kinase 6 (Ptk6), found in Mus musculus (Mouse).